The chain runs to 619 residues: MSLDIAKYPTLALAENPEELRMLPKESLPKLCDELRQYLLTCVSRSSGHFASGLGVVELTVALHYVYNTPFDHLIWDVGHQAYPHKILTGRRDRISTIRQKDGLHPFPWRGESEYDVLSVGHSSTSISAGLGMAVAAEREGKGRRTVCVIGDGAITAGMAFEAMSHAGDIHSDMLVILNDNGMSISENVGGLNNHLAQLLSGKLYASLREGGKKAFSALPPIKDLLKRTEEHLKGMVVPSTLFEELGFNYIGPVDGHDVHTLTQTLKNMRDLKSPQLLHIMTKKGKGYAPAEKDPIGWHAVPKFDPASGTLPKSQSSLPTYSKIFGEWLCETAAKDSKLMAVTPAMREGSGMVRFSREYPQQYFDVAIAEQHAVTFAAGLAIGGYKPVVAIYSTFLQRAYDQLIHDVAIQNLPVLFAIDRGGLVGADGQTHQGAFDLSFMRCIPNMVIMAPSDENECRQMLYTGYHHNGPAAVRYPRGNGTSAVLEPLEMLPIGKGVLRREGEKIAILCFGTLLAQAQLAAENLNATLVDMRFVKPLDEELVLEMAAKHQVLVTVEENAIMGGAGSGVNELLMAKRRWVPVLNIGLPDLFVPQGEQDEMRSELGLDAAGIQRQIEAWLA.

Thiamine diphosphate is bound by residues His80 and 121–123; that span reads GHS. Asp152 provides a ligand contact to Mg(2+). Residues 153–154, Asn181, Tyr288, and Glu370 contribute to the thiamine diphosphate site; that span reads GA. Asn181 lines the Mg(2+) pocket.

Belongs to the transketolase family. DXPS subfamily. As to quaternary structure, homodimer. Requires Mg(2+) as cofactor. The cofactor is thiamine diphosphate.

It catalyses the reaction D-glyceraldehyde 3-phosphate + pyruvate + H(+) = 1-deoxy-D-xylulose 5-phosphate + CO2. It functions in the pathway metabolic intermediate biosynthesis; 1-deoxy-D-xylulose 5-phosphate biosynthesis; 1-deoxy-D-xylulose 5-phosphate from D-glyceraldehyde 3-phosphate and pyruvate: step 1/1. Its function is as follows. Catalyzes the acyloin condensation reaction between C atoms 2 and 3 of pyruvate and glyceraldehyde 3-phosphate to yield 1-deoxy-D-xylulose-5-phosphate (DXP). The chain is 1-deoxy-D-xylulose-5-phosphate synthase from Yersinia pestis (strain Pestoides F).